Here is a 349-residue protein sequence, read N- to C-terminus: Peroxidase C3 (349 aa).

The signal sequence occupies residues 1–29 (MGFSPLISCSAMGALILSCLLLQASNSNA). Cystine bridges form between C40/C120, C73/C78, C126/C329, and C206/C238. H71 serves as the catalytic Proton acceptor. Residues D72, V75, G77, D79, and S81 each coordinate Ca(2+). N86 carries an N-linked (GlcNAc...) asparagine glycan. P168 contacts substrate. Position 199 (H199) interacts with heme b. T200 provides a ligand contact to Ca(2+). N-linked (GlcNAc...) asparagine glycans are attached at residues N217 and N243. Ca(2+) is bound by residues D251, T254, and D259.

This sequence belongs to the peroxidase family. Classical plant (class III) peroxidase subfamily. Requires Ca(2+) as cofactor. Heme b serves as cofactor.

The protein localises to the secreted. It localises to the vacuole. It catalyses the reaction 2 a phenolic donor + H2O2 = 2 a phenolic radical donor + 2 H2O. Its function is as follows. Removal of H(2)O(2), oxidation of toxic reductants, biosynthesis and degradation of lignin, suberization, auxin catabolism, response to environmental stresses such as wounding, pathogen attack and oxidative stress. These functions might be dependent on each isozyme/isoform in each plant tissue. This Armoracia rusticana (Horseradish) protein is Peroxidase C3 (PRXC3).